The primary structure comprises 228 residues: Ephrin-A5 (228 aa).

An N-terminal signal peptide occupies residues 1–20 (MLHVEMLTLLFLVLWMCVFS). The 134-residue stretch at 29–162 (ADRYAVYWNS…KLKVFVRPTN (134 aa)) folds into the Ephrin RBD domain. Residue asparagine 37 is glycosylated (N-linked (GlcNAc...) asparagine). Disulfide bonds link cysteine 62/cysteine 102 and cysteine 90/cysteine 151. An N-linked (GlcNAc...) asparagine; atypical glycan is attached at asparagine 162. The segment at 186 to 205 (EPADDTVHESAEPSRGENAA) is disordered. Positions 190–200 (DTVHESAEPSR) are enriched in basic and acidic residues. A lipid anchor (GPI-anchor amidated asparagine) is attached at asparagine 203. Residues 204 to 228 (AAQTPRIPSRLLAILLFLLAMLLTL) constitute a propeptide, removed in mature form.

It belongs to the ephrin family. As to quaternary structure, binds to the receptor tyrosine kinases EPHA2, EPHA3 and EPHB1. Forms a ternary EFNA5-EPHA3-ADAM10 complex mediating EFNA5 extracellular domain shedding by ADAM10 which regulates the EFNA5-EPHA3 complex internalization and function. Binds to EPHB2. Interacts with EPHA8; activates EPHA8. As to expression, expressed in myogenic progenitor cells.

The protein resides in the cell membrane. It is found in the membrane. Its subcellular location is the caveola. In terms of biological role, cell surface GPI-bound ligand for Eph receptors, a family of receptor tyrosine kinases which are crucial for migration, repulsion and adhesion during neuronal, vascular and epithelial development. Binds promiscuously Eph receptors residing on adjacent cells, leading to contact-dependent bidirectional signaling into neighboring cells. The signaling pathway downstream of the receptor is referred to as forward signaling while the signaling pathway downstream of the ephrin ligand is referred to as reverse signaling. Induces compartmentalized signaling within a caveolae-like membrane microdomain when bound to the extracellular domain of its cognate receptor. This signaling event requires the activity of the Fyn tyrosine kinase. Activates the EPHA3 receptor to regulate cell-cell adhesion and cytoskeletal organization. With the receptor EPHA2 may regulate lens fiber cells shape and interactions and be important for lens transparency maintenance. May function actively to stimulate axon fasciculation. The interaction of EFNA5 with EPHA5 also mediates communication between pancreatic islet cells to regulate glucose-stimulated insulin secretion. Cognate/functional ligand for EPHA7, their interaction regulates brain development modulating cell-cell adhesion and repulsion. This is Ephrin-A5 (Efna5) from Mus musculus (Mouse).